The primary structure comprises 406 residues: MLLAEIISVGTELLLGEIVDSNAAFLARELAARGITLHRKVVLGDNLKRLAEGLRTALARADLVIVGGGLGPTDDDLTREAIAEVLEETPTEDPALLAWLEGLYAARGRPMPQVNRKQAWLIPSAQALPNPVGTAPGWFVRTGGKIIVALPGPPRELQRMWREQVLPRLPLPDHALFAVTLHTQGIGESNIAELLGDLTKAANPSVATYARQTGVDVRVAASAPTAEEARALAAPVLDTVRHILARWIWGEDGDTLAGAVTQTLGGRTLGVIEAGSGGALCLLLADQPGFLDAAVTVDHARLITLGLTPVTLGSVGVVSEAAARELAAGAREHLGAEVGLAVVTATAGEQAGQAFVALSAENAENVAHVNWPGDPAQIRERAAVAALALAYRTLRLPQPSGKAGHA.

This sequence belongs to the CinA family.

The sequence is that of CinA-like protein from Deinococcus geothermalis (strain DSM 11300 / CIP 105573 / AG-3a).